The chain runs to 521 residues: CDP-diacylglycerol--glycerol-3-phosphate 3-phosphatidyltransferase (521 aa).

Residue A91 to S98 coordinates ATP. 2 PLD phosphodiesterase domains span residues G177–Y203 and N419–A457. Residues H182, K184, and D189 contribute to the active site.

This sequence belongs to the CDP-alcohol phosphatidyltransferase class-II family.

The protein localises to the mitochondrion. It carries out the reaction a CDP-1,2-diacyl-sn-glycerol + sn-glycerol 3-phosphate = a 1,2-diacyl-sn-glycero-3-phospho-(1'-sn-glycero-3'-phosphate) + CMP + H(+). It participates in phospholipid metabolism; phosphatidylglycerol biosynthesis; phosphatidylglycerol from CDP-diacylglycerol: step 1/2. In terms of biological role, essential for the viability of mitochondrial petite mutant. Catalyzes the committed step to the synthesis of the acidic phospholipids. This Saccharomyces cerevisiae (strain ATCC 204508 / S288c) (Baker's yeast) protein is CDP-diacylglycerol--glycerol-3-phosphate 3-phosphatidyltransferase (PGS1).